A 419-amino-acid chain; its full sequence is UDP-N-acetylmuramoylalanine--D-glutamate ligase (419 aa).

109–115 (GSAGKTT) provides a ligand contact to ATP.

This sequence belongs to the MurCDEF family.

Its subcellular location is the cytoplasm. The enzyme catalyses UDP-N-acetyl-alpha-D-muramoyl-L-alanine + D-glutamate + ATP = UDP-N-acetyl-alpha-D-muramoyl-L-alanyl-D-glutamate + ADP + phosphate + H(+). Its pathway is cell wall biogenesis; peptidoglycan biosynthesis. Cell wall formation. Catalyzes the addition of glutamate to the nucleotide precursor UDP-N-acetylmuramoyl-L-alanine (UMA). This Chlamydia caviae (strain ATCC VR-813 / DSM 19441 / 03DC25 / GPIC) (Chlamydophila caviae) protein is UDP-N-acetylmuramoylalanine--D-glutamate ligase.